A 312-amino-acid chain; its full sequence is DNA-directed RNA polymerase subunit alpha (312 aa).

An alpha N-terminal domain (alpha-NTD) region spans residues 1-225 (MIEFEKPNIT…VEHFKVFESA (225 aa)). Positions 243 to 312 (KEKKLEMTIE…DLGLSLRQED (70 aa)) are alpha C-terminal domain (alpha-CTD).

It belongs to the RNA polymerase alpha chain family. As to quaternary structure, homodimer. The RNAP catalytic core consists of 2 alpha, 1 beta, 1 beta' and 1 omega subunit. When a sigma factor is associated with the core the holoenzyme is formed, which can initiate transcription.

It carries out the reaction RNA(n) + a ribonucleoside 5'-triphosphate = RNA(n+1) + diphosphate. In terms of biological role, DNA-dependent RNA polymerase catalyzes the transcription of DNA into RNA using the four ribonucleoside triphosphates as substrates. In Lactobacillus helveticus (strain DPC 4571), this protein is DNA-directed RNA polymerase subunit alpha.